The sequence spans 198 residues: Small ribosomal subunit protein uS2 (198 aa).

It belongs to the universal ribosomal protein uS2 family.

The chain is Small ribosomal subunit protein uS2 from Methanobrevibacter smithii (strain ATCC 35061 / DSM 861 / OCM 144 / PS).